The chain runs to 406 residues: chitinase-like effector (406 aa).

A signal peptide spans 1–23 (MLTLLPSLILLLSTLSLSTPANA). The GH18 domain occupies 26–405 (AIAKAYYPGW…DAVRHGAGFK (380 aa)). Residues Tyr-138 and Trp-384 each contribute to the chitin site.

It belongs to the glycosyl hydrolase 18 family.

Its subcellular location is the secreted. Its function is as follows. Catalytically impaired chitinase that binds efficiently to chitin, but not to chitosan, xylan, or cellulose. Despite the lack of chitinolytic activity, retains substrate binding specificity and acts as an effector to prevent chitin-triggered immunity by sequestering immunogenic chitin fragments. The chain is chitinase-like effector (Chi) from Moniliophthora roreri (Frosty pod rot fungus).